Consider the following 375-residue polypeptide: PTS system fructose-specific EIIC component (375 aa).

One can recognise a PTS EIIC type-2 domain in the interval 16 to 370 (VKEDLMTGVS…KPNFDAKMAA (355 aa)). Helical transmembrane passes span 24–44 (VSFM…GYAV), 68–88 (IGVA…AYAI), 93–113 (GLAP…LQAA), 122–142 (GSAG…GIVA), 160–180 (VLLI…FVLG), 203–223 (AILL…GPIN), 238–258 (VTAP…GLAL), 279–299 (VLLG…ADPA), 301–321 (VIPS…ALGV), and 340–360 (FMFI…ATAI).

It localises to the cell membrane. Its function is as follows. The phosphoenolpyruvate-dependent sugar phosphotransferase system (sugar PTS), a major carbohydrate active transport system, catalyzes the phosphorylation of incoming sugar substrates concomitantly with their translocation across the cell membrane. The enzyme II PtfABC PTS system is involved in fructose transport. The sequence is that of PTS system fructose-specific EIIC component from Haloferax volcanii (strain ATCC 29605 / DSM 3757 / JCM 8879 / NBRC 14742 / NCIMB 2012 / VKM B-1768 / DS2) (Halobacterium volcanii).